The chain runs to 1007 residues: Glutamate receptor ionotropic, delta-2 (1007 aa).

The first 23 residues, 1–23 (MEVFPLLLFLSFCWSRTWDLATA), serve as a signal peptide directing secretion. An interaction with CBLN1 homotrimer region spans residues 24–345 (DSIIHIGAIF…NAFHKKLEDR (322 aa)). At 24–566 (DSIIHIGAIF…DMFACLAPFD (543 aa)) the chain is on the extracellular side. 3 cysteine pairs are disulfide-bonded: Cys-83/Cys-355, Cys-99/Cys-131, and Cys-298/Cys-310. N-linked (GlcNAc...) asparagine glycosylation is present at Asn-293. A glycan (N-linked (GlcNAc...) asparagine) is linked at Asn-426. Ca(2+) is bound by residues Glu-531, Val-534, and Asp-535. Residues 567–587 (LSLWACIAGTVLLVGLLVYLL) traverse the membrane as a helical segment. Over 588–635 (NWLNPPRLQMGSMTSTTLYNSMWFVYGSFVQQGGEVPYTTLATRMMMG) the chain is Cytoplasmic. A helical transmembrane segment spans residues 636–656 (AWWLFALIVISSYTANLAAFL). The Extracellular portion of the chain corresponds to 657 to 830 (TITRIESSIQ…QKGGALDIKS (174 aa)). 2 N-linked (GlcNAc...) asparagine glycosylation sites follow: Asn-713 and Asn-716. Positions 753, 755, and 757 each coordinate Ca(2+). Residues 831 to 851 (LAGVFCILAAGIVLSCLIAVL) form a helical membrane-spanning segment. At 852–1007 (ETWWSRRKGS…GNDPDRGTSI (156 aa)) the chain is on the cytoplasmic side. Ser-883 is subject to Phosphoserine. A Phosphothreonine modification is found at Thr-886. Phosphoserine is present on Ser-890. The interaction with AP4M1 stretch occupies residues 921 to 991 (DFRNTHITTT…MSSIPYQPTP (71 aa)). The short motif at 1005-1007 (TSI) is the PDZ-binding element. Ser-1006 carries the phosphoserine modification.

Belongs to the glutamate-gated ion channel (TC 1.A.10.1) family. GRID2 subfamily. As to quaternary structure, tetramer; dimer of dimers. Interacts with EML2, MAGI2 (via PDZ domains) and AP4M1. Interacts with BECN1, GOPC, GRID2IP, SHANK1 and SHANK2. Interacts with CBLN2, but not with CBLN4. Interacts with CBLN1 (via C1q domain); the interaction is CBLN1-NRX1 complex formation-dependent; CBLN1-binding is calcium-independent; CBLN1 hexamers anchor GRID2 N-terminal domain dimers to monomeric NRXN1 isoform beta; promotes synaptogenesis and mediates the D-Serine-dependent long term depression signals and AMPA receptor endocytosis. Expressed selectively in cerebellar Purkinje cells where it is localized in dendritic spines.

The protein resides in the postsynaptic cell membrane. It catalyses the reaction Ca(2+)(in) = Ca(2+)(out). The catalysed reaction is Na(+)(in) = Na(+)(out). Its function is as follows. Member of the ionotropic glutamate receptor family, which plays a crucial role in synaptic organization and signal transduction in the central nervous system. Although it shares structural features with ionotropic glutamate receptors, does not bind glutamate as a primary ligand. Promotes synaptogenesis and mediates the D-Serine-dependent long term depression signals and AMPA receptor endocytosis of cerebellar parallel fiber-Purkinje cell (PF-PC) synapses through the NRX1B-CBLN1-GRID2 triad complex. In the presence of neurexins and cerebellins, forms cation-selective channels that are proposed to be gated by glycine and D-serine. However, recent research disputes this ligand-gated cation channel activity. Cation-selective ion channel activity can be triggered by GRM1 in Purkinje cells. In Mus musculus (Mouse), this protein is Glutamate receptor ionotropic, delta-2 (Grid2).